An 83-amino-acid chain; its full sequence is Small ribosomal subunit protein uS17 (83 aa).

This sequence belongs to the universal ribosomal protein uS17 family. Part of the 30S ribosomal subunit.

One of the primary rRNA binding proteins, it binds specifically to the 5'-end of 16S ribosomal RNA. In Pseudoalteromonas atlantica (strain T6c / ATCC BAA-1087), this protein is Small ribosomal subunit protein uS17.